Consider the following 291-residue polypeptide: Omega-amidase NIT3 (291 aa).

A CN hydrolase domain is found at 11–264 (IKVALVQLSG…EEIIYAELDP (254 aa)). Thr-34 bears the Phosphothreonine mark. Glu-53 functions as the Proton acceptor in the catalytic mechanism. Residue Lys-128 is the Proton donor of the active site. Residue Cys-169 is the Nucleophile of the active site.

The protein belongs to the carbon-nitrogen hydrolase superfamily. NIT1/NIT2 family. In terms of assembly, homodimer.

The catalysed reaction is a monoamide of a dicarboxylate + H2O = a dicarboxylate + NH4(+). Possesses omega-amidase activity. The role of omega-amidase is to remove potentially toxic intermediates by converting 2-oxoglutaramate and 2-oxosuccinamate to biologically useful 2-oxoglutarate and oxaloacetate, respectively. This Saccharomyces cerevisiae (strain ATCC 204508 / S288c) (Baker's yeast) protein is Omega-amidase NIT3 (NIT3).